Reading from the N-terminus, the 424-residue chain is Putative ankyrin repeat protein R858 (424 aa).

4 ANK repeats span residues 115-144 (HLMCACIYSINDSNLELVKLLVNNFNFTKR), 147-177 (TDHTALSYAFKNPGNIKIIGFLLNYIESDYF), 184-215 (INDSLIYWSKTDYLPCIEMAKLLIKAEASINY), and 219-252 (TGSTILINIINNKNYYNITDLVKFLLTEGVDIHE).

The polypeptide is Putative ankyrin repeat protein R858 (Acanthamoeba polyphaga (Amoeba)).